Consider the following 415-residue polypeptide: MPTWTEYILYKKLGKTPSPGDVVEIVPDLVGFHDLTGYHVLEVLESMGKVEVFDRERVVVAFDHLSPPPNQRAAEIMVYIRRHVKALGLPNFYDVGGGILHQIILEKYALPGQVIFAADSHTNTAGAVGAFAHGMGATDIAAALKLGKTWIVVPAPFRIDVVGEFPIGVMGKDVALHLLGQFGAEGFNGYSVEVFVETPKAFPMDDRATVANMSTEMGADALMFIPDVITAEYLKTERGVDYTPPRIEPGNYADKYTVELPRLEPLVAAPYSVDNIKSVREVEGVEVDQVFIGSCTNGRLSDIAVAAKILKGRRVKSRCIAIPASYEVFRRAMKLGYIDVLTEAGCVVTYGTCGPCLGGHFGVAGPGEVVVTTSNRNFRGRVGHPDAKIYLANPAVAAATAAEGKIADPRPYLRG.

3 residues coordinate [4Fe-4S] cluster: Cys-295, Cys-353, and Cys-356.

The protein belongs to the aconitase/IPM isomerase family. LeuC type 2 subfamily. Heterodimer of LeuC and LeuD. [4Fe-4S] cluster is required as a cofactor.

It catalyses the reaction (2R,3S)-3-isopropylmalate = (2S)-2-isopropylmalate. It functions in the pathway amino-acid biosynthesis; L-leucine biosynthesis; L-leucine from 3-methyl-2-oxobutanoate: step 2/4. Catalyzes the isomerization between 2-isopropylmalate and 3-isopropylmalate, via the formation of 2-isopropylmaleate. In Pyrobaculum aerophilum (strain ATCC 51768 / DSM 7523 / JCM 9630 / CIP 104966 / NBRC 100827 / IM2), this protein is 3-isopropylmalate dehydratase large subunit.